The following is a 236-amino-acid chain: Probable 6-phosphogluconolactonase (236 aa).

It belongs to the glucosamine/galactosamine-6-phosphate isomerase family. 6-phosphogluconolactonase subfamily.

It carries out the reaction 6-phospho-D-glucono-1,5-lactone + H2O = 6-phospho-D-gluconate + H(+). It functions in the pathway carbohydrate degradation; pentose phosphate pathway; D-ribulose 5-phosphate from D-glucose 6-phosphate (oxidative stage): step 2/3. In terms of biological role, hydrolysis of 6-phosphogluconolactone to 6-phosphogluconate. In Dictyostelium discoideum (Social amoeba), this protein is Probable 6-phosphogluconolactonase (pgl).